The chain runs to 235 residues: Proteasome subunit alpha (235 aa).

The protein belongs to the peptidase T1A family. In terms of assembly, the 20S proteasome core is composed of 14 alpha and 14 beta subunits that assemble into four stacked heptameric rings, resulting in a barrel-shaped structure. The two inner rings, each composed of seven catalytic beta subunits, are sandwiched by two outer rings, each composed of seven alpha subunits. The catalytic chamber with the active sites is on the inside of the barrel. Has a gated structure, the ends of the cylinder being occluded by the N-termini of the alpha-subunits. Is capped by the proteasome-associated ATPase, ARC.

It localises to the cytoplasm. Its pathway is protein degradation; proteasomal Pup-dependent pathway. Its activity is regulated as follows. The formation of the proteasomal ATPase ARC-20S proteasome complex, likely via the docking of the C-termini of ARC into the intersubunit pockets in the alpha-rings, may trigger opening of the gate for substrate entry. Interconversion between the open-gate and close-gate conformations leads to a dynamic regulation of the 20S proteasome proteolysis activity. Component of the proteasome core, a large protease complex with broad specificity involved in protein degradation. In Paenarthrobacter aurescens (strain TC1), this protein is Proteasome subunit alpha.